The primary structure comprises 283 residues: Tetrahydroxynaphthalene reductase (283 aa).

The segment at 1 to 21 is disordered; it reads MPAVTQPRGESKYDAIPGPLG. NADP(+) is bound at residue 39–63; sequence RGIGREMAMELGRRGCKVIVNYANS. A substrate-binding site is contributed by Ser164. Catalysis depends on Tyr178, which acts as the Proton acceptor.

It belongs to the short-chain dehydrogenases/reductases (SDR) family. In terms of assembly, homotetramer.

It carries out the reaction scytalone + NADP(+) = naphthalene-1,3,6,8-tetrol + NADPH + H(+). It participates in pigment biosynthesis; melanin biosynthesis. Catalyzes the NADPH-dependent reduction of 1,3,6,8-tetrahydroxynaphthalene (T4HN) into (+)-scytalone and 1,3,8-trihydroxynaphthalene into (-)-vermelone. This enzyme is the biochemical target of several commercially important fungicides which are used to prevent blast disease in rice plants. This Pyricularia oryzae (strain 70-15 / ATCC MYA-4617 / FGSC 8958) (Rice blast fungus) protein is Tetrahydroxynaphthalene reductase.